Consider the following 320-residue polypeptide: tRNA dimethylallyltransferase (320 aa).

Residue 17–24 (GPTASGKT) participates in ATP binding. 19–24 (TASGKT) serves as a coordination point for substrate. Interaction with substrate tRNA stretches follow at residues 42-45 (DSAL), 166-170 (QRIQR), and 249-254 (RCVGYR).

This sequence belongs to the IPP transferase family. In terms of assembly, monomer. Mg(2+) serves as cofactor.

It carries out the reaction adenosine(37) in tRNA + dimethylallyl diphosphate = N(6)-dimethylallyladenosine(37) in tRNA + diphosphate. Catalyzes the transfer of a dimethylallyl group onto the adenine at position 37 in tRNAs that read codons beginning with uridine, leading to the formation of N6-(dimethylallyl)adenosine (i(6)A). This Herminiimonas arsenicoxydans protein is tRNA dimethylallyltransferase.